The sequence spans 279 residues: Thymidylate synthase (279 aa).

133–134 (RR) serves as a coordination point for dUMP. Cys-154 acts as the Nucleophile in catalysis. Residues 178 to 181 (RSND), Asn-189, and 219 to 221 (HIY) each bind dUMP. Asp-181 is a (6R)-5,10-methylene-5,6,7,8-tetrahydrofolate binding site. Ala-278 is a (6R)-5,10-methylene-5,6,7,8-tetrahydrofolate binding site.

This sequence belongs to the thymidylate synthase family. Bacterial-type ThyA subfamily. In terms of assembly, homodimer.

The protein resides in the cytoplasm. The enzyme catalyses dUMP + (6R)-5,10-methylene-5,6,7,8-tetrahydrofolate = 7,8-dihydrofolate + dTMP. It participates in pyrimidine metabolism; dTTP biosynthesis. In terms of biological role, catalyzes the reductive methylation of 2'-deoxyuridine-5'-monophosphate (dUMP) to 2'-deoxythymidine-5'-monophosphate (dTMP) while utilizing 5,10-methylenetetrahydrofolate (mTHF) as the methyl donor and reductant in the reaction, yielding dihydrofolate (DHF) as a by-product. This enzymatic reaction provides an intracellular de novo source of dTMP, an essential precursor for DNA biosynthesis. The chain is Thymidylate synthase from Streptococcus pneumoniae (strain ATCC 700669 / Spain 23F-1).